Reading from the N-terminus, the 338-residue chain is MIEIEKVCVDFTAGRGTSTRAVDDVSLHIAAGEIFGIVGTSGAGKSTLLRTLNALTRPSQGRVNVNGVEISALDGKALRQARQRIGIIFQHFNLMHTRTVAQNVAFSLKAAGWERSKIAPRVAEILTLVGLADKANRFPVQLSGGQKQRVGIARAIANHPDVLLCDEPTSALDLETSATILALLRQINAQLGITIVLITHEMNVIKSICDRVAVMSGGKVVESGEVFDVFAHPQHAFTQQLVSHTLNLTLPERLREHLPGQLLKILFIGDSAEQPVLSEVAIKFGVAVNILHGKIEYIGERALGILVVQLTAPHNPTAVAAAVEHIRQRTAQVEVIRG.

The region spanning 2 to 242 (IEIEKVCVDF…PQHAFTQQLV (241 aa)) is the ABC transporter domain. Residue 39-46 (GTSGAGKS) participates in ATP binding.

The protein belongs to the ABC transporter superfamily. Methionine importer (TC 3.A.1.24) family. In terms of assembly, the complex is composed of two ATP-binding proteins (MetN), two transmembrane proteins (MetI) and a solute-binding protein (MetQ).

It localises to the cell inner membrane. The enzyme catalyses L-methionine(out) + ATP + H2O = L-methionine(in) + ADP + phosphate + H(+). The catalysed reaction is D-methionine(out) + ATP + H2O = D-methionine(in) + ADP + phosphate + H(+). In terms of biological role, part of the ABC transporter complex MetNIQ involved in methionine import. Responsible for energy coupling to the transport system. The protein is Methionine import ATP-binding protein MetN 2 of Salmonella choleraesuis (strain SC-B67).